The following is a 488-amino-acid chain: DNA polymerase II small subunit (488 aa).

It belongs to the DNA polymerase delta/II small subunit family. As to quaternary structure, heterodimer of a large subunit and a small subunit.

The enzyme catalyses DNA(n) + a 2'-deoxyribonucleoside 5'-triphosphate = DNA(n+1) + diphosphate. The catalysed reaction is Exonucleolytic cleavage in the 3'- to 5'-direction to yield nucleoside 5'-phosphates.. Its function is as follows. Possesses two activities: a DNA synthesis (polymerase) and an exonucleolytic activity that degrades single-stranded DNA in the 3' to 5' direction. Has a template-primer preference which is characteristic of a replicative DNA polymerase. In Archaeoglobus fulgidus (strain ATCC 49558 / DSM 4304 / JCM 9628 / NBRC 100126 / VC-16), this protein is DNA polymerase II small subunit (polB).